Consider the following 317-residue polypeptide: Acetyl-coenzyme A carboxylase carboxyl transferase subunit alpha (317 aa).

The CoA carboxyltransferase C-terminal domain occupies 40–293 (LEKRSADALK…GDIITASLRS (254 aa)).

Belongs to the AccA family. In terms of assembly, acetyl-CoA carboxylase is a heterohexamer composed of biotin carboxyl carrier protein (AccB), biotin carboxylase (AccC) and two subunits each of ACCase subunit alpha (AccA) and ACCase subunit beta (AccD).

It localises to the cytoplasm. It catalyses the reaction N(6)-carboxybiotinyl-L-lysyl-[protein] + acetyl-CoA = N(6)-biotinyl-L-lysyl-[protein] + malonyl-CoA. It participates in lipid metabolism; malonyl-CoA biosynthesis; malonyl-CoA from acetyl-CoA: step 1/1. In terms of biological role, component of the acetyl coenzyme A carboxylase (ACC) complex. First, biotin carboxylase catalyzes the carboxylation of biotin on its carrier protein (BCCP) and then the CO(2) group is transferred by the carboxyltransferase to acetyl-CoA to form malonyl-CoA. This Brucella anthropi (strain ATCC 49188 / DSM 6882 / CCUG 24695 / JCM 21032 / LMG 3331 / NBRC 15819 / NCTC 12168 / Alc 37) (Ochrobactrum anthropi) protein is Acetyl-coenzyme A carboxylase carboxyl transferase subunit alpha.